We begin with the raw amino-acid sequence, 427 residues long: 3-phosphoshikimate 1-carboxyvinyltransferase (427 aa).

Residues lysine 20, serine 21, and arginine 25 each contribute to the 3-phosphoshikimate site. Lysine 20 contributes to the phosphoenolpyruvate binding site. Phosphoenolpyruvate contacts are provided by glycine 92 and arginine 120. 4 residues coordinate 3-phosphoshikimate: serine 166, glutamine 168, aspartate 312, and lysine 339. Glutamine 168 contributes to the phosphoenolpyruvate binding site. The active-site Proton acceptor is the aspartate 312. 2 residues coordinate phosphoenolpyruvate: arginine 343 and arginine 385.

Belongs to the EPSP synthase family. Monomer.

It is found in the cytoplasm. The catalysed reaction is 3-phosphoshikimate + phosphoenolpyruvate = 5-O-(1-carboxyvinyl)-3-phosphoshikimate + phosphate. It participates in metabolic intermediate biosynthesis; chorismate biosynthesis; chorismate from D-erythrose 4-phosphate and phosphoenolpyruvate: step 6/7. Functionally, catalyzes the transfer of the enolpyruvyl moiety of phosphoenolpyruvate (PEP) to the 5-hydroxyl of shikimate-3-phosphate (S3P) to produce enolpyruvyl shikimate-3-phosphate and inorganic phosphate. The polypeptide is 3-phosphoshikimate 1-carboxyvinyltransferase (Streptococcus thermophilus (strain ATCC BAA-250 / LMG 18311)).